The sequence spans 145 residues: Deoxyuridine 5'-triphosphate nucleotidohydrolase (145 aa).

This sequence belongs to the dUTPase family. It depends on Mg(2+) as a cofactor.

The enzyme catalyses dUTP + H2O = dUMP + diphosphate + H(+). This enzyme is involved in nucleotide metabolism: it produces dUMP, the immediate precursor of thymidine nucleotides and it decreases the intracellular concentration of dUTP so that uracil cannot be incorporated into DNA. The protein is Deoxyuridine 5'-triphosphate nucleotidohydrolase (DUT) of Fowlpox virus (strain NVSL) (FPV).